The following is a 255-amino-acid chain: Pimeloyl-[acyl-carrier protein] methyl ester esterase (255 aa).

Residues 16 to 241 (LVLLHGWGLN…AAHAPFISHP (226 aa)) form the AB hydrolase-1 domain. Residues Trp22, 81-82 (SL), and 142-146 (FLALQ) contribute to the substrate site. The active-site Nucleophile is the Ser81. Residues Asp206 and His234 contribute to the active site. His234 contributes to the substrate binding site.

Belongs to the AB hydrolase superfamily. Carboxylesterase BioH family. As to quaternary structure, monomer.

The protein resides in the cytoplasm. The catalysed reaction is 6-carboxyhexanoyl-[ACP] methyl ester + H2O = 6-carboxyhexanoyl-[ACP] + methanol + H(+). It participates in cofactor biosynthesis; biotin biosynthesis. Its function is as follows. The physiological role of BioH is to remove the methyl group introduced by BioC when the pimeloyl moiety is complete. It allows to synthesize pimeloyl-ACP via the fatty acid synthetic pathway through the hydrolysis of the ester bonds of pimeloyl-ACP esters. Also displays a weak thioesterase activity. Can form a complex with CoA, and may be involved in the condensation of CoA and pimelic acid into pimeloyl-CoA, a precursor in biotin biosynthesis. This is Pimeloyl-[acyl-carrier protein] methyl ester esterase from Serratia marcescens.